The sequence spans 141 residues: Hemoglobin subunit alpha-1 (141 aa).

The Globin domain maps to 1-141 (VLSEGNKKAI…VTYQLSSLYR (141 aa)). Histidine 59 is a binding site for O2. Histidine 88 provides a ligand contact to heme b.

This sequence belongs to the globin family. Heterotetramer of two alpha chains and two beta chains. In terms of tissue distribution, red blood cells.

Functionally, involved in oxygen transport from the lung to the various peripheral tissues. The chain is Hemoglobin subunit alpha-1 from Torpedo marmorata (Marbled electric ray).